The following is a 115-amino-acid chain: U31-theraphotoxin-Cg1b (115 aa).

Residues 1-18 (MKLCVIIIASLMVASVSG) form the signal peptide. Residues 19-51 (RLRKIKGTELDKKMLLEKLGHGMDIRFEETPRE) constitute a propeptide that is removed on maturation. 4 disulfide bridges follow: Cys52–Cys67, Cys60–Cys73, Cys64–Cys113, and Cys66–Cys86.

Belongs to the neurotoxin 03 (Tx2) family. 02 subfamily. As to expression, expressed by the venom gland.

It localises to the secreted. Probable ion channel inhibitor. This chain is U31-theraphotoxin-Cg1b, found in Chilobrachys guangxiensis (Chinese earth tiger tarantula).